We begin with the raw amino-acid sequence, 182 residues long: ATP-dependent protease subunit HslV (182 aa).

Thr7 is an active-site residue. Na(+)-binding residues include Ala166, Cys169, and Thr172.

It belongs to the peptidase T1B family. HslV subfamily. As to quaternary structure, a double ring-shaped homohexamer of HslV is capped on each side by a ring-shaped HslU homohexamer. The assembly of the HslU/HslV complex is dependent on binding of ATP.

It localises to the cytoplasm. It catalyses the reaction ATP-dependent cleavage of peptide bonds with broad specificity.. With respect to regulation, allosterically activated by HslU binding. Functionally, protease subunit of a proteasome-like degradation complex believed to be a general protein degrading machinery. This chain is ATP-dependent protease subunit HslV, found in Albidiferax ferrireducens (strain ATCC BAA-621 / DSM 15236 / T118) (Rhodoferax ferrireducens).